The chain runs to 363 residues: Cytochrome b (363 aa).

4 helical membrane passes run 24 to 44, 68 to 90, 105 to 125, and 171 to 191; these read VGFS…CLAW, FVIR…IHIF, VWFI…IGYV, and LHVL…LHLF. Residues H74 and H88 each contribute to the heme b site. Positions 175 and 189 each coordinate heme b. H194 provides a ligand contact to a ubiquinone. Transmembrane regions (helical) follow at residues 219-239, 287-307, 321-341, and 342-362; these read FYLR…YVIF, FLMV…ILWF, LILF…VLAY, and PIWM…VCRL.

Belongs to the cytochrome b family. The main subunits of complex b-c1 are: cytochrome b, cytochrome c1 and the Rieske protein. It depends on heme b as a cofactor.

The protein localises to the mitochondrion inner membrane. In terms of biological role, component of the ubiquinol-cytochrome c reductase complex (complex III or cytochrome b-c1 complex) that is part of the mitochondrial respiratory chain. The b-c1 complex mediates electron transfer from ubiquinol to cytochrome c. Contributes to the generation of a proton gradient across the mitochondrial membrane that is then used for ATP synthesis. This chain is Cytochrome b (MT-CYB), found in Trypanosoma brucei brucei.